The chain runs to 296 residues: MAAKTKFRGSFTALVTPFKNGSLDEAAFRSLVNWQISEGTNGLVPVGTTGESPTLSHDEHKKVVEWCIEEAKGRVPVVAGAGSNSTKEAIELAQHAEKAGADAVLVVTPYYNKPTQEGMYQHFKAINDAIGIPIIIYNIPPRSVIDMSVDTMKRLWELKNIAGVKDATASMVRVSQQRAAMGEDFNQLSGEDATILGYMAHGGHGCISVTSNVAPRLCSEFHTAWQKGDHATALKLHDKLMPLHNNLFIESNPAPIKYAMSLLGKLDETLRLPMVPVTEPTRVAVRSAMVHAGLIN.

Threonine 49 contacts pyruvate. The Proton donor/acceptor role is filled by tyrosine 137. The active-site Schiff-base intermediate with substrate is lysine 165. Residue isoleucine 207 coordinates pyruvate.

This sequence belongs to the DapA family. Homotetramer; dimer of dimers.

The protein localises to the cytoplasm. The catalysed reaction is L-aspartate 4-semialdehyde + pyruvate = (2S,4S)-4-hydroxy-2,3,4,5-tetrahydrodipicolinate + H2O + H(+). The protein operates within amino-acid biosynthesis; L-lysine biosynthesis via DAP pathway; (S)-tetrahydrodipicolinate from L-aspartate: step 3/4. Catalyzes the condensation of (S)-aspartate-beta-semialdehyde [(S)-ASA] and pyruvate to 4-hydroxy-tetrahydrodipicolinate (HTPA). The sequence is that of 4-hydroxy-tetrahydrodipicolinate synthase from Bradyrhizobium diazoefficiens (strain JCM 10833 / BCRC 13528 / IAM 13628 / NBRC 14792 / USDA 110).